Here is a 230-residue protein sequence, read N- to C-terminus: Ion-translocating oxidoreductase complex subunit E (230 aa).

The next 6 helical transmembrane spans lie at 18–38, 39–59, 63–83, 86–106, 125–145, and 182–202; these read ALVQ…ATNA, LGLG…VSAL, TPAE…VSAV, LINA…PLIV, WLSA…MFVL, and PFLL…MLAV.

Belongs to the NqrDE/RnfAE family. As to quaternary structure, the complex is composed of six subunits: RsxA, RsxB, RsxC, RsxD, RsxE and RsxG.

The protein resides in the cell inner membrane. Functionally, part of a membrane-bound complex that couples electron transfer with translocation of ions across the membrane. Required to maintain the reduced state of SoxR. This is Ion-translocating oxidoreductase complex subunit E from Salmonella agona (strain SL483).